A 189-amino-acid chain; its full sequence is Interferon alpha-1 (189 aa).

The signal sequence occupies residues 1 to 23 (MAPTSAFLTALVLLSCNAICSLG). 2 disulfide bridges follow: C24-C122 and C52-C162.

It belongs to the alpha/beta interferon family. In terms of assembly, interacts with CR2.

It localises to the secreted. In terms of biological role, produced by macrophages, IFN-alpha have antiviral activities. Interferon stimulates the production of two enzymes: a protein kinase and an oligoadenylate synthetase. This is Interferon alpha-1 from Sus scrofa (Pig).